Reading from the N-terminus, the 136-residue chain is MVNDTISDMLTRIRNASMVKKSTVLIPFTKMNQKIAQILEKEGFIQSFFLEEDSKMLVLKFKYRSKKTSNAKTKESCITNLKRISKPGLRIYTNSQDIPRVLGGAGILILSTSVGILTDREARALGVGGEILCSIW.

The protein belongs to the universal ribosomal protein uS8 family. Part of the 30S ribosomal subunit.

Its subcellular location is the plastid. It is found in the chloroplast. Functionally, one of the primary rRNA binding proteins, it binds directly to 16S rRNA central domain where it helps coordinate assembly of the platform of the 30S subunit. This chain is Small ribosomal subunit protein uS8c (rps8), found in Tetradesmus obliquus (Green alga).